Here is a 357-residue protein sequence, read N- to C-terminus: Maleylacetate reductase 1 (357 aa).

It belongs to the iron-containing alcohol dehydrogenase family.

The enzyme catalyses 3-oxoadipate + NAD(+) = maleylacetate + NADH + H(+). It carries out the reaction 3-oxoadipate + NADP(+) = maleylacetate + NADPH + H(+). Its pathway is aromatic compound metabolism; 3-chlorocatechol degradation. In terms of biological role, plays a major role in the degradation of chloroaromatic compounds by channeling maleylacetate and some of its substituted derivatives into the 3-oxoadipate pathway. This enzyme converts maleylacetate and 2-chloromaleylacetate with similar efficiencies. This Rhodococcus opacus (Nocardia opaca) protein is Maleylacetate reductase 1 (macA).